The following is an 879-amino-acid chain: MTKEHKKMYKAGKYWAVATLVSASILMEVGVTTHADAVENNKYDGTANVNIDCQANVDGKIISTDDNATSGSTKQESSIANDNATSGSTKQESSIANDNATSGSTKQESSIANDNATSGSTKQESSVANDNATSGSTKQESSVANDNATSGSTKQESSVANDNATSGSTKQESSVANDTKTAVVDESKNTSNTENDNSQLKQTNNEQPSAATQANLKKLNHEAAKAVQNAKIDAGSLTDEQINELNKINFSKSAEKGAKLTFKDLEGIGNAIVKQDPQYAVPYFNAKEIKNMPASYTVDAQTGKMAHLDVWDSWPVQDPTGYVSNYKGYQLVIAMMGIPNTPNGDNHIYLLYNKYGDNDFSHWRNAGSIFGTNENNVYQEWSGSAIVNDNGTIQLFYTSNDTSDYKLNDQRLATATLNLDVDDNGVAIKSVDNYHILFEGDGFHYQTYDQFANGKDRKNDDYCLRDPHVVQSENGDRYLVFEANTGMEDYQSDDQIYNWANYGGDDAFNIKSFFKLLNNKNDRELASLANGAIGILKLNNDQTNPKVEEVYSPLVSTLMASDEVERVNVVKLGDKYYLFSATRVSRGSDRELNAKDITIVGDNVAMIGYVSDNLMGKYKPLNNSGVVLTASVPANWRTATYSYYAVPVEGHPDQVLITSYMSNKDFASGEGNYATLAPSFIVQINPDDTTTVLARATNQGDWVWDDSSRNDNMLGVLKEGAVNSAALPGEWGKPVDWSLINRSSGLGLKPHQPVNPSQPTTPATPVNPSQPTTPATPVNPSQPTTPATPVNPSATTTPATPVNPSATTTPAKPVNPSQPTTPAKPVQAGQATATNFVDQRLPQTGENNSQSQTMSFIGILLAMFGSLLGFLGIKKRRND.

The N-terminal stretch at 1 to 37 is a signal peptide; it reads MTKEHKKMYKAGKYWAVATLVSASILMEVGVTTHADA. Tandem repeats lie at residues 66–81, 82–97, 98–113, 114–129, 130–145, 146–161, and 162–177. The interval 66 to 177 is 7 X 16 AA tandem repeats of D-N-A-T-S-G-S-T-K-Q-E-S-S-[IV]-A-N; sequence DNATSGSTKQ…STKQESSVAN (112 aa). 2 stretches are compositionally biased toward polar residues: residues 66–180 and 189–213; these read DNAT…NDTK and NTSN…AATQ. The interval 66–213 is disordered; that stretch reads DNATSGSTKQ…NNEQPSAATQ (148 aa). Positions 311, 312, and 382 each coordinate sucrose. Aspartate 312 serves as the catalytic Nucleophile. Residue aspartate 460 coordinates Ca(2+). 2 residues coordinate sucrose: arginine 465 and aspartate 466. Ca(2+)-binding residues include glutamine 491, leucine 528, asparagine 530, and aspartate 562. Glutamate 563 contacts sucrose. The active-site Proton donor/acceptor is the glutamate 565. Position 583 (arginine 583) interacts with sucrose. The disordered stretch occupies residues 743–830; it reads SSGLGLKPHQ…TPAKPVQAGQ (88 aa). Residues 754-821 are compositionally biased toward polar residues; that stretch reads VNPSQPTTPA…KPVNPSQPTT (68 aa). The LPXTG sorting signal motif lies at 841–845; it reads LPQTG. Threonine 844 carries the pentaglycyl murein peptidoglycan amidated threonine modification. Positions 845-879 are cleaved as a propeptide — removed by sortase; sequence GENNSQSQTMSFIGILLAMFGSLLGFLGIKKRRND.

The protein belongs to the glycosyl hydrolase 68 family.

Its subcellular location is the secreted. The protein localises to the cell wall. It catalyses the reaction [6)-beta-D-fructofuranosyl-(2-&gt;](n) alpha-D-glucopyranoside + sucrose = [6)-beta-D-fructofuranosyl-(2-&gt;](n+1) alpha-D-glucopyranoside + D-glucose. Ca(2+) may play an important structural role and promote stability of levansucrase. In terms of biological role, fructosyltransferase that catalyzes the polymerization of the fructose moiety of sucrose to produce levan polymer and the fructo-oligosaccharide (FOS) 1-kestose. Also displays sucrose hydrolase activity. The polypeptide is Levansucrase (Fructilactobacillus sanfranciscensis (Lactobacillus sanfranciscensis)).